We begin with the raw amino-acid sequence, 445 residues long: MLKKQSAGLVLWGAILFVAWNALLLLFFWTRPAPGRPPSVSALDGDPASLTREVIRLAQDAEVELERQRGLLQQIGDALSSQRGRVPTAAPPAQPRVPVTPAPAVIPILVIACDRSTVRRCLDKLLHYRPSAELFPIIVSQDCGHEETAQAIASYGSAVTHIRQPDLSSIAVPPDHRKFQGYYKIARHYRWALGQVFRQFRFPAAVVVEDDLEVAPDFFEYFRATYPLLKADPSLWCVSAWNDNGKEQMVDASRPELLYRTDFFPGLGWLLLAELWAELEPKWPKAFWDDWMRRPEQRQGRACIRPEISRTMTFGRKGVSHGQFFDQHLKFIKLNQQFVHFTQLDLSYLQREAYDRDFLARVYGAPQLQVEKVRTNDRKELGEVRVQYTGRDSFKAFAKALGVMDDLKSGVPRAGYRGIVTFQFRGRRVHLAPPLTWEGYDPSWN.

The Cytoplasmic segment spans residues 1–6; that stretch reads MLKKQS. The helical; Signal-anchor for type II membrane protein transmembrane segment at 7–29 threads the bilayer; sequence AGLVLWGAILFVAWNALLLLFFW. Residues 30–445 lie on the Lumenal side of the membrane; it reads TRPAPGRPPS…TWEGYDPSWN (416 aa). A disulfide bridge connects residues C113 and C143. Positions 115, 142, 188, and 210 each coordinate substrate. D211 contributes to the Mn(2+) binding site. A disulfide bridge links C237 with C303. Residue D289 is the Proton acceptor of the active site. S320 contributes to the substrate binding site.

It belongs to the glycosyltransferase 13 family. As to quaternary structure, interacts with MGAT4D. Interacts with BRI3 (isoforms 1 and 2); the interaction with isoform 2 is weaker than with isoform 1. Requires Mn(2+) as cofactor.

Its subcellular location is the golgi apparatus membrane. The protein localises to the cytoplasm. It localises to the perinuclear region. The enzyme catalyses N(4)-(alpha-D-Man-(1-&gt;3)-[alpha-D-Man-(1-&gt;3)-[alpha-D-Man-(1-&gt;6)]-alpha-D-Man-(1-&gt;6)]-beta-D-Man-(1-&gt;4)-beta-D-GlcNAc-(1-&gt;4)-beta-D-GlcNAc)-L-asparaginyl-[protein] (N-glucan mannose isomer 5A1,2) + UDP-N-acetyl-alpha-D-glucosamine = N(4)-{beta-D-GlcNAc-(1-&gt;2)-alpha-D-Man-(1-&gt;3)-[alpha-D-Man-(1-&gt;3)-[alpha-D-Man-(1-&gt;6)]-alpha-D-Man-(1-&gt;6)]-beta-D-Man-(1-&gt;4)-beta-D-GlcNAc-(1-&gt;4)-beta-D-GlcNAc}-L-asparaginyl-[protein] + UDP + H(+). It functions in the pathway protein modification; protein glycosylation. In terms of biological role, initiates complex N-linked carbohydrate formation. Essential for the conversion of high-mannose to hybrid and complex N-glycans. This Homo sapiens (Human) protein is Alpha-1,3-mannosyl-glycoprotein 2-beta-N-acetylglucosaminyltransferase (MGAT1).